The chain runs to 609 residues: Isopenicillin N epimerase component 1 (609 aa).

185–196 lines the AMP pocket; sequence MLSGSGTTGLPK. The tract at residues 545 to 570 is disordered; sequence STDNHKHNKVPLRDEGVDPRSMGSKV.

It belongs to the ATP-dependent AMP-binding enzyme family.

It carries out the reaction isopenicillin N = penicillin N. Its pathway is antibiotic biosynthesis; cephalosporin C biosynthesis. In terms of biological role, together with cefD2, catalyzes the reversible isomerization between isopenicillin N and penicillin N. This two-component IPN epimerase system may function by two sequential steps, an activation of isopenicillin N by the acyl-CoA synthase component cefD1, followed by epimerization by the acyl-CoA racemase component cefD2. This is Isopenicillin N epimerase component 1 (cefD1) from Hapsidospora chrysogena (Acremonium chrysogenum).